Here is a 466-residue protein sequence, read N- to C-terminus: Fumarate hydratase class II (466 aa).

Substrate-binding positions include S99–T101, H129–D132, S139–N141, and T187. H188 (proton donor/acceptor) is an active-site residue. The active site involves S318. Substrate-binding positions include S319 and K324–N326.

This sequence belongs to the class-II fumarase/aspartase family. Fumarase subfamily. In terms of assembly, homotetramer.

The protein localises to the cytoplasm. It carries out the reaction (S)-malate = fumarate + H2O. It functions in the pathway carbohydrate metabolism; tricarboxylic acid cycle; (S)-malate from fumarate: step 1/1. Involved in the TCA cycle. Catalyzes the stereospecific interconversion of fumarate to L-malate. This is Fumarate hydratase class II from Thermus aquaticus.